A 143-amino-acid chain; its full sequence is Transcriptional regulator MraZ (143 aa).

SpoVT-AbrB domains follow at residues 5-47 and 76-119; these read EYDH…TLDE and AVEV…DRET.

It belongs to the MraZ family. Forms oligomers.

The protein resides in the cytoplasm. Its subcellular location is the nucleoid. The protein is Transcriptional regulator MraZ of Staphylococcus aureus (strain Mu3 / ATCC 700698).